The primary structure comprises 319 residues: MLFATLEHILTHISFSTISIVITIHLITLLVRELGGLRDSSEKGMIVTFFSITGFLVSRWASSGHFPLSNLYESLIFLSWALYILHTIPKIQNSKNDLSTITTPSTILTQGFATSGLLTEMHQSTILVPALQSQWLMMHVSMMLLSYATLLCGSLLSAAILIIRFRNNFHFFSKKKKNVLHKTFLFSDFYAKRSALKSTSVPSFPNYYKYQLTERLDSWSYRVISLGFTLLTIGILCGAVWANEAWGSYWNWDPKETWAFITWTIFAIYLHSRTNQNWKGTNSALVASIGFLIIWICYFGINLLGIGLHSYGSFTLTPK.

The next 7 membrane-spanning stretches (helical) occupy residues 9–29, 44–64, 68–88, 143–163, 223–243, 257–271, and 286–306; these read ILTH…LITL, GMIV…ASSG, LSNL…LHTI, MLLS…ILII, VISL…VWAN, TWAF…IYLH, and VASI…LLGI.

It belongs to the CcmF/CycK/Ccl1/NrfE/CcsA family. As to quaternary structure, may interact with Ccs1.

It localises to the plastid. The protein resides in the chloroplast thylakoid membrane. Functionally, required during biogenesis of c-type cytochromes (cytochrome c6 and cytochrome f) at the step of heme attachment. In Agrostis stolonifera (Creeping bentgrass), this protein is Cytochrome c biogenesis protein CcsA.